We begin with the raw amino-acid sequence, 283 residues long: Protoheme IX farnesyltransferase (283 aa).

A run of 7 helical transmembrane segments spans residues 13–33, 35–55, 90–110, 156–176, 208–228, 230–250, and 262–282; these read ISSV…PTGL, GGTL…VGTL, ILLV…LTAV, LGAG…PHFL, MIGF…TEAA, WIYG…TIVF, and VLKA…VDWF.

The protein belongs to the UbiA prenyltransferase family. Protoheme IX farnesyltransferase subfamily.

Its subcellular location is the cell inner membrane. The enzyme catalyses heme b + (2E,6E)-farnesyl diphosphate + H2O = Fe(II)-heme o + diphosphate. It functions in the pathway porphyrin-containing compound metabolism; heme O biosynthesis; heme O from protoheme: step 1/1. Functionally, converts heme B (protoheme IX) to heme O by substitution of the vinyl group on carbon 2 of heme B porphyrin ring with a hydroxyethyl farnesyl side group. The polypeptide is Protoheme IX farnesyltransferase (Salinibacter ruber (strain DSM 13855 / M31)).